Reading from the N-terminus, the 143-residue chain is Transcriptional regulator MraZ (143 aa).

SpoVT-AbrB domains lie at 5 to 47 (THSP…TTRE) and 76 to 119 (ANAE…DAGT).

It belongs to the MraZ family. Forms oligomers.

The protein localises to the cytoplasm. It is found in the nucleoid. This Clavibacter michiganensis subsp. michiganensis (strain NCPPB 382) protein is Transcriptional regulator MraZ.